A 433-amino-acid chain; its full sequence is Peptidoglycan DD-endopeptidase ShyC (433 aa).

Residues 10 to 30 traverse the membrane as a helical segment; that stretch reads WLHRVLITAFSAIIVFAIFFL. Zn(2+) is bound by residues His-299, Asp-303, and His-380.

The protein belongs to the peptidase M23B family. Zn(2+) serves as cofactor.

The protein resides in the cell inner membrane. Its pathway is cell wall degradation; peptidoglycan degradation. With respect to regulation, reduced activity in 0.5 mM EDTA and a complete loss of activity at higher EDTA concentrations. In terms of biological role, cell wall peptidoglycan (PG) DD-endopeptidase. Hydrolyzes peptide cross-links which covalently connect adjacent PG strands probably to allow insertion of new glycans and thus cell wall expansion. Degrades purified whole PG sacculi in vitro. This is Peptidoglycan DD-endopeptidase ShyC from Vibrio cholerae serotype O1 (strain ATCC 39315 / El Tor Inaba N16961).